The following is a 511-amino-acid chain: Cytochrome P450 705A5 (511 aa).

The helical transmembrane segment at 12–30 (CFIFLLLCLFSRLSYDLFF) threads the bilayer. Position 454 (Cys-454) interacts with heme.

This sequence belongs to the cytochrome P450 family. It depends on heme as a cofactor. In terms of tissue distribution, expressed primarily in the root epidermis.

It localises to the membrane. In terms of biological role, converts thalian-diol to a desaturated thalian-diol. The polypeptide is Cytochrome P450 705A5 (CYP705A5) (Arabidopsis thaliana (Mouse-ear cress)).